The primary structure comprises 78 residues: D-alanyl carrier protein (78 aa).

Residues 1–78 (MAFRENVLEI…MIITQLEALK (78 aa)) enclose the Carrier domain. O-(pantetheine 4'-phosphoryl)serine is present on S36.

It belongs to the DltC family. Post-translationally, 4'-phosphopantetheine is transferred from CoA to a specific serine of apo-DCP.

Its subcellular location is the cytoplasm. It functions in the pathway cell wall biogenesis; lipoteichoic acid biosynthesis. Carrier protein involved in the D-alanylation of lipoteichoic acid (LTA). The loading of thioester-linked D-alanine onto DltC is catalyzed by D-alanine--D-alanyl carrier protein ligase DltA. The DltC-carried D-alanyl group is further transferred to cell membrane phosphatidylglycerol (PG) by forming an ester bond, probably catalyzed by DltD. D-alanylation of LTA plays an important role in modulating the properties of the cell wall in Gram-positive bacteria, influencing the net charge of the cell wall. In Listeria welshimeri serovar 6b (strain ATCC 35897 / DSM 20650 / CCUG 15529 / CIP 8149 / NCTC 11857 / SLCC 5334 / V8), this protein is D-alanyl carrier protein.